We begin with the raw amino-acid sequence, 249 residues long: MNIVKIKDLSLFYGKTHALKNINMNIEKNKVTALIGPSGCGKSTFLRSINRMNDFIENVNIDGEVIFHGKDIYKEFDEIDLRKRVGMVFQKANPFPMSIYDNVAYGPRIHGIKNKNELDIIVEKSLKKAALWDEIKDRLNKNAQGLSGGQQQRLCIARTLAVEPELILMDEPTSALDPISTSKIEELMHTLKKDYPVIIVTHNMQQAGRISDDTAFFLSGEVIEFGKTSNIFYNPQDKRTEDYISGRFG.

The ABC transporter domain occupies 4–244 (VKIKDLSLFY…PQDKRTEDYI (241 aa)). 36 to 43 (GPSGCGKS) is a binding site for ATP.

Belongs to the ABC transporter superfamily. Phosphate importer (TC 3.A.1.7) family. The complex is composed of two ATP-binding proteins (PstB), two transmembrane proteins (PstC and PstA) and a solute-binding protein (PstS).

Its subcellular location is the cell membrane. It carries out the reaction phosphate(out) + ATP + H2O = ADP + 2 phosphate(in) + H(+). Its function is as follows. Part of the ABC transporter complex PstSACB involved in phosphate import. Responsible for energy coupling to the transport system. In Clostridium tetani (strain Massachusetts / E88), this protein is Phosphate import ATP-binding protein PstB.